A 407-amino-acid chain; its full sequence is Carbamoyl phosphate synthase small chain (407 aa).

The tract at residues 1 to 205 (MTETTPKTAP…LQDGYGEQDA (205 aa)) is CPSase. 3 residues coordinate L-glutamine: serine 60, glycine 257, and glycine 259. One can recognise a Glutamine amidotransferase type-1 domain in the interval 209–397 (HVVALDFGVK…INLIRERKGQ (189 aa)). The active-site Nucleophile is the cysteine 286. 5 residues coordinate L-glutamine: leucine 287, glutamine 290, asparagine 328, glycine 330, and phenylalanine 331. Active-site residues include histidine 370 and glutamate 372.

The protein belongs to the CarA family. Composed of two chains; the small (or glutamine) chain promotes the hydrolysis of glutamine to ammonia, which is used by the large (or ammonia) chain to synthesize carbamoyl phosphate. Tetramer of heterodimers (alpha,beta)4.

It carries out the reaction hydrogencarbonate + L-glutamine + 2 ATP + H2O = carbamoyl phosphate + L-glutamate + 2 ADP + phosphate + 2 H(+). The enzyme catalyses L-glutamine + H2O = L-glutamate + NH4(+). Its pathway is amino-acid biosynthesis; L-arginine biosynthesis; carbamoyl phosphate from bicarbonate: step 1/1. It participates in pyrimidine metabolism; UMP biosynthesis via de novo pathway; (S)-dihydroorotate from bicarbonate: step 1/3. Its function is as follows. Small subunit of the glutamine-dependent carbamoyl phosphate synthetase (CPSase). CPSase catalyzes the formation of carbamoyl phosphate from the ammonia moiety of glutamine, carbonate, and phosphate donated by ATP, constituting the first step of 2 biosynthetic pathways, one leading to arginine and/or urea and the other to pyrimidine nucleotides. The small subunit (glutamine amidotransferase) binds and cleaves glutamine to supply the large subunit with the substrate ammonia. In Brucella canis (strain ATCC 23365 / NCTC 10854 / RM-666), this protein is Carbamoyl phosphate synthase small chain.